The primary structure comprises 452 residues: Class E vacuolar protein-sorting machinery protein HSE1 (452 aa).

S2 is subject to N-acetylserine. Positions 15-145 (ATDPKLRSDN…KIKRKAPYLV (131 aa)) constitute a VHS domain. Disordered regions lie at residues 144 to 166 (LVQP…DDEE) and 187 to 212 (QEKE…PAHK). Position 162 is a phosphoserine (S162). One can recognise a UIM domain in the interval 162–181 (SDDEELQKALKMSLFEYEKQ). Positions 197 to 207 (QQQQQHQQQNQ) are enriched in low complexity. The SH3 domain maps to 217-276 (TVVRRVRALYDLTTNEPDELSFRKGDVITVLEQVYRDWWKGALRGNMGIFPLNYVTPIVE). The segment at 389-452 (AGMTHANNTP…VSQPPPGYEQ (64 aa)) is disordered. The span at 393-433 (HANNTPVMPPQRQSYQSNEYSPYPSNLPIQHPTNSANNTPQ) shows a compositional bias: polar residues.

This sequence belongs to the STAM family. As to quaternary structure, component of the ESCRT-0 complex composed of HSE1 and VPS27. Interacts with the ESCRT-I subunit VPS23, the UBP7 deubiquitinase and the E3 ligase RSP5. May form a complex composed of VPS27, HSE1 and DOA1. Interacts (via SH3 domain) with DOA1.

It is found in the endosome membrane. In terms of biological role, component of the ESCRT-0 complex which is the sorting receptor for ubiquitinated cargo proteins at the multivesicular body (MVB) and recruits ESCRT-I to the MVB outer membrane. This is Class E vacuolar protein-sorting machinery protein HSE1 (HSE1) from Saccharomyces cerevisiae (strain ATCC 204508 / S288c) (Baker's yeast).